The following is a 128-amino-acid chain: Large ribosomal subunit protein bL12 (128 aa).

It belongs to the bacterial ribosomal protein bL12 family. Homodimer. Part of the ribosomal stalk of the 50S ribosomal subunit. Forms a multimeric L10(L12)X complex, where L10 forms an elongated spine to which 2 to 4 L12 dimers bind in a sequential fashion. Binds GTP-bound translation factors.

Its function is as follows. Forms part of the ribosomal stalk which helps the ribosome interact with GTP-bound translation factors. Is thus essential for accurate translation. In Desulfosudis oleivorans (strain DSM 6200 / JCM 39069 / Hxd3) (Desulfococcus oleovorans), this protein is Large ribosomal subunit protein bL12.